The primary structure comprises 102 residues: Large ribosomal subunit protein bL21 (102 aa).

The protein belongs to the bacterial ribosomal protein bL21 family. Part of the 50S ribosomal subunit. Contacts protein L20.

In terms of biological role, this protein binds to 23S rRNA in the presence of protein L20. The protein is Large ribosomal subunit protein bL21 of Sorangium cellulosum (strain So ce56) (Polyangium cellulosum (strain So ce56)).